The sequence spans 278 residues: HTH-type transcriptional activator RhaS (278 aa).

The HTH araC/xylS-type domain occupies 174–272 (NQLMAWLEDH…NWSPRDIRQG (99 aa)). DNA-binding regions (H-T-H motif) lie at residues 191 to 212 (EAVA…KQHT) and 239 to 262 (VTEI…RREF).

As to quaternary structure, binds DNA as a dimer.

It localises to the cytoplasm. In terms of biological role, activates expression of the rhaBAD and rhaT operons. This is HTH-type transcriptional activator RhaS from Salmonella paratyphi A (strain ATCC 9150 / SARB42).